Consider the following 394-residue polypeptide: NAD(P)H-quinone oxidoreductase subunit H (394 aa).

It belongs to the complex I 49 kDa subunit family. In terms of assembly, NDH-1 can be composed of about 15 different subunits; different subcomplexes with different compositions have been identified which probably have different functions.

Its subcellular location is the cellular thylakoid membrane. It carries out the reaction a plastoquinone + NADH + (n+1) H(+)(in) = a plastoquinol + NAD(+) + n H(+)(out). The enzyme catalyses a plastoquinone + NADPH + (n+1) H(+)(in) = a plastoquinol + NADP(+) + n H(+)(out). Its function is as follows. NDH-1 shuttles electrons from an unknown electron donor, via FMN and iron-sulfur (Fe-S) centers, to quinones in the respiratory and/or the photosynthetic chain. The immediate electron acceptor for the enzyme in this species is believed to be plastoquinone. Couples the redox reaction to proton translocation, and thus conserves the redox energy in a proton gradient. Cyanobacterial NDH-1 also plays a role in inorganic carbon-concentration. The polypeptide is NAD(P)H-quinone oxidoreductase subunit H (Prochlorococcus marinus (strain SARG / CCMP1375 / SS120)).